Reading from the N-terminus, the 870-residue chain is Elastin (870 aa).

An N-terminal signal peptide occupies residues Met-1–Pro-27. Residues Pro-39 and Pro-75 each carry the 4-hydroxyproline modification. At Pro-87 the chain carries Hydroxyproline. Pro-105 carries the 4-hydroxyproline modification. Residues Lys-122 and Lys-126 each carry the allysine modification. A 4-hydroxyproline mark is found at Pro-207, Pro-220, Pro-223, and Pro-244. An allysine mark is found at Lys-290 and Lys-309. Pro-338 is modified (4-hydroxyproline). Allysine occurs at positions 360 and 363. Pro-375 bears the Hydroxyproline mark. Residues Pro-402 and Pro-408 each carry the 4-hydroxyproline modification. A hydroxyproline mark is found at Pro-413 and Pro-418. Allysine occurs at positions 434, 438, 441, 485, and 488. Residues Pro-518 and Pro-539 each carry the 4-hydroxyproline modification. Allysine is present on residues Lys-554, Lys-558, Lys-615, Lys-619, and Lys-623. 4 positions are modified to 4-hydroxyproline: Pro-637, Pro-646, Pro-662, and Pro-670. Allysine occurs at positions 677 and 680. Pro-715 is subject to 4-hydroxyproline. Allysine is present on residues Lys-730, Lys-734, Lys-793, and Lys-796. Pro-842 is subject to 4-hydroxyproline. Cys-860 and Cys-865 are joined by a disulfide.

Belongs to the elastin family. As to quaternary structure, the polymeric elastin chains are cross-linked together into an extensible 3D network. Forms a ternary complex with BGN and MFAP2. Interacts with MFAP2 via divalent cations (calcium &gt; magnesium &gt; manganese) in a dose-dependent and saturating manner. Interacts with FBLN5 and FBN1. Forms a ternary complex with FBN1 and FBLN2 or FBLN5. Interacts with MFAP4 in a Ca (2+)-dependent manner; this interaction promotes ELN self-assembly. Interacts with EFEMP2 with moderate affinity. Elastin is formed through the cross-linking of its soluble precursor tropoelastin. Cross-linking is initiated through the action of lysyl oxidase on exposed lysines to form allysine. Subsequent spontaneous condensation reactions with other allysine or unmodified lysine residues result in various bi-, tri-, and tetrafunctional cross-links. The most abundant cross-links in mature elastin fibers are lysinonorleucine, allysine aldol, desmosine, and isodesmosine. In terms of processing, hydroxylation on proline residues within the sequence motif, GXPG, is most likely to be 4-hydroxy as this fits the requirement for 4-hydroxylation in vertebrates.

Its subcellular location is the secreted. The protein resides in the extracellular space. It localises to the extracellular matrix. Its function is as follows. Major structural protein of tissues such as aorta and nuchal ligament, which must expand rapidly and recover completely. Molecular determinant of the late arterial morphogenesis, stabilizing arterial structure by regulating proliferation and organization of vascular smooth muscle. The chain is Elastin (Eln) from Rattus norvegicus (Rat).